The sequence spans 169 residues: Cyclic pyranopterin monophosphate synthase (169 aa).

Substrate is bound by residues 83 to 85 (LCH) and 121 to 122 (ME). Aspartate 136 is an active-site residue.

The protein belongs to the MoaC family. Homohexamer; trimer of dimers.

The enzyme catalyses (8S)-3',8-cyclo-7,8-dihydroguanosine 5'-triphosphate = cyclic pyranopterin phosphate + diphosphate. The protein operates within cofactor biosynthesis; molybdopterin biosynthesis. In terms of biological role, catalyzes the conversion of (8S)-3',8-cyclo-7,8-dihydroguanosine 5'-triphosphate to cyclic pyranopterin monophosphate (cPMP). This is Cyclic pyranopterin monophosphate synthase from Rhodospirillum centenum (strain ATCC 51521 / SW).